We begin with the raw amino-acid sequence, 532 residues long: Neutral amino acid transporter A (532 aa).

Methionine 1 bears the N-acetylmethionine mark. Positions 1–29 (MEKSGETNGYLDGTQAEPAAGPRTPETAM) are disordered. Residues 1–41 (MEKSGETNGYLDGTQAEPAAGPRTPETAMGKSQRCASFFRR) lie on the Cytoplasmic side of the membrane. Transmembrane regions (helical) follow at residues 42 to 62 (HALV…GAAL), 88 to 108 (MIIL…LDAS), and 119 to 139 (AYFG…AFII). Topologically, residues 140 to 216 (KPGAGAQTLQ…VTKEKIPVVT (77 aa)) are extracellular. N-linked (GlcNAc...) asparagine glycosylation is found at asparagine 201 and asparagine 206. 6 helical membrane passes run 217–237 (DVEG…GVAL), 257–277 (ATMV…MFLI), 298–318 (IFAS…LVYF), 328–348 (FLLG…SSAT), 373–393 (IGAT…AVFI), and 418–438 (VGAA…LEAI). Residues 495-532 (EAIPNSKSEEETSPLVTHQNPAGPVAIAPELESKESVL) are disordered. A phosphoserine mark is found at serine 507, serine 527, and serine 530.

Belongs to the dicarboxylate/amino acid:cation symporter (DAACS) (TC 2.A.23) family. SLC1A4 subfamily.

Its subcellular location is the membrane. The protein localises to the melanosome. The enzyme catalyses L-threonine(in) + Na(+)(in) = L-threonine(out) + Na(+)(out). It catalyses the reaction L-serine(in) + Na(+)(in) = L-serine(out) + Na(+)(out). It carries out the reaction L-cysteine(in) + Na(+)(in) = L-cysteine(out) + Na(+)(out). The catalysed reaction is L-alanine(in) + Na(+)(in) = L-alanine(out) + Na(+)(out). The enzyme catalyses L-proline(in) + Na(+)(in) = L-proline(out) + Na(+)(out). It catalyses the reaction 4-hydroxy-L-proline(in) + Na(+)(in) = 4-hydroxy-L-proline(out) + Na(+)(out). In terms of biological role, sodium-dependent neutral amino-acid transporter that mediates transport of alanine, serine, cysteine, proline, hydroxyproline and threonine. This Mus musculus (Mouse) protein is Neutral amino acid transporter A (Slc1a4).